Here is a 244-residue protein sequence, read N- to C-terminus: DNA repair protein RecO (244 aa).

It belongs to the RecO family.

Functionally, involved in DNA repair and RecF pathway recombination. This chain is DNA repair protein RecO, found in Polynucleobacter necessarius subsp. necessarius (strain STIR1).